The primary structure comprises 428 residues: uncharacterized protein (428 aa).

The next 12 membrane-spanning stretches (helical) occupy residues L14 to F34, Y55 to A75, F84 to S104, W107 to F127, F149 to L169, A182 to I202, L238 to M258, S272 to G292, T302 to E322, T324 to L344, F361 to A381, and T392 to P412.

Belongs to the major facilitator superfamily.

The protein localises to the cell membrane. This is an uncharacterized protein from Bacillus subtilis (strain 168).